The sequence spans 480 residues: REST corepressor 1 (480 aa).

Residues 1–105 (MPAMVEKGPE…GGGMRVGPQY (105 aa)) form a disordered region. 2 stretches are compositionally biased toward low complexity: residues 21–58 (AASAASAAASAASAAASAAASAGTASASAAAAASAAAA) and 66–89 (SLAAAAPNGNSGSNSWEEGSSGSS). Residues 72–251 (PNGNSGSNSW…RHARKQKRER (180 aa)) form an interaction with HDAC1 region. Positions 97 to 183 (GGMRVGPQYQ…KSLADLPNFT (87 aa)) constitute an ELM2 domain. Residue K116 forms a Glycyl lysine isopeptide (Lys-Gly) (interchain with G-Cter in SUMO2) linkage. S121 carries the post-translational modification Phosphoserine. The region spanning 184–235 (PFPDEWTVEDKVLFEQAFSFHGKTFHRIQQMLPDKSIASLVKFYYSWKKTRT) is the SANT 1 domain. Positions 238-265 (SVMDRHARKQKREREESEDELEETNGSN) form a coiled coil. The tract at residues 238–308 (SVMDRHARKQ…AKNRAKRKPP (71 aa)) is disordered. S254 carries the phosphoserine modification. Residues 272–282 (DPNKESKKEVP) are compositionally biased toward basic and acidic residues. Residues 290–378 (VKKEKHSTQA…LPEVIQKCNA (89 aa)) are interaction with KDM1A. A Glycyl lysine isopeptide (Lys-Gly) (interchain with G-Cter in SUMO2) cross-link involves residue K291. The stretch at 328–363 (ATTVLRQLDMELVSIKRQIQNIKQTNSALKEKLDGG) forms a coiled coil. An SANT 2 domain is found at 375–426 (KCNARWTTEEQLLAVQAIRKYGRDFQAISDVIGNKSVVQVKNFFVNYRRRFN). The tract at residues 436–466 (AEHGKDETNGPANQKPVKSPESSIKIPEEED) is disordered. S454 is subject to Phosphoserine. K460 is covalently cross-linked (Glycyl lysine isopeptide (Lys-Gly) (interchain with G-Cter in SUMO2)).

It belongs to the CoREST family. In terms of assembly, component of a BHC histone deacetylase complex that contains HDAC1, HDAC2, HMG20B/BRAF35, KDM1A, RCOR1/CoREST and PHF21A/BHC80. The BHC complex may also contain ZMYM2, ZNF217, ZMYM3, GSE1 and GTF2I. Interacts with REST. Interacts with the SMARCE1/BAF57, suggesting that the BHC complex may recruit the ATP-dependent chromatin-remodeling SWI-SNF complex. Interacts directly with GFI1 and GFI1B in a RCOR/GFI/KDM1A/HDAC complex. Interacts with INMS1. Interacts with SOX2. In terms of tissue distribution, expressed in the external germinal layer (EGL) and internal granular layer (IGL) of the cerebellum and in Purkinje cells (at protein level).

It is found in the nucleus. In terms of biological role, essential component of the BHC complex, a corepressor complex that represses transcription of neuron-specific genes in non-neuronal cells. The BHC complex is recruited at RE1/NRSE sites by REST and acts by deacetylating and demethylating specific sites on histones, thereby acting as a chromatin modifier. In the BHC complex, it serves as a molecular beacon for the recruitment of molecular machinery, including MeCP2 and SUV39H1, that imposes silencing across a chromosomal interval. Plays a central role in demethylation of Lys-4 of histone H3 by promoting demethylase activity of KDM1A on core histones and nucleosomal substrates. It also protects KDM1A from the proteasome. Component of a RCOR/GFI/KDM1A/HDAC complex that suppresses, via histone deacetylase (HDAC) recruitment, a number of genes implicated in multilineage blood cell development and controls hematopoietic differentiation. This Mus musculus (Mouse) protein is REST corepressor 1 (Rcor1).